Reading from the N-terminus, the 295-residue chain is Inositol monophosphatase 1 (295 aa).

The Mg(2+) site is built by Glu-73, Asp-92, Ile-94, Asp-95, and Asp-231. A substrate-binding site is contributed by Glu-73. Substrate contacts are provided by residues 94-97 and Asp-231; that span reads IDGT.

It belongs to the inositol monophosphatase superfamily. Mg(2+) serves as cofactor.

Its subcellular location is the cytoplasm. The protein resides in the nucleus. The enzyme catalyses a myo-inositol phosphate + H2O = myo-inositol + phosphate. It participates in polyol metabolism; myo-inositol biosynthesis; myo-inositol from D-glucose 6-phosphate: step 2/2. Its activity is regulated as follows. Inhibited by Li(+) and Na(+). Responsible for the provision of inositol required for synthesis of phosphatidylinositol and polyphosphoinositides. This chain is Inositol monophosphatase 1 (INM1), found in Saccharomyces cerevisiae (strain ATCC 204508 / S288c) (Baker's yeast).